Reading from the N-terminus, the 117-residue chain is Transcription elongation factor A protein-like 8 (117 aa).

Basic and acidic residues-rich tracts occupy residues Met-1 to Gly-10 and Phe-61 to Met-75. The disordered stretch occupies residues Met-1–Met-75. A coiled-coil region spans residues Glu-73 to His-100.

Belongs to the TFS-II family. TFA subfamily.

It is found in the nucleus. Its function is as follows. May be involved in transcriptional regulation. The chain is Transcription elongation factor A protein-like 8 (TCEAL8) from Homo sapiens (Human).